The following is a 564-amino-acid chain: O-fucosyltransferase 5 (564 aa).

The disordered stretch occupies residues 1-28; the sequence is MVRNSSDEEEDHRNLIPQNDTRDNDLNL. The helical; Signal-anchor for type II membrane protein transmembrane segment at 70-90 threads the bilayer; sequence YVVAAVSLTLFVGLLFLFTDT. N-linked (GlcNAc...) asparagine glycosylation is found at Asn-129, Asn-134, and Asn-174. Residues 413–415 and 529–530 each bind substrate; these read HLR and TF.

Belongs to the glycosyltransferase GT106 family.

The protein localises to the membrane. It participates in glycan metabolism. This is O-fucosyltransferase 5 from Arabidopsis thaliana (Mouse-ear cress).